The following is a 434-amino-acid chain: Vi polysaccharide export inner-membrane protein VexD (434 aa).

Residues 1–50 (MENSERIKKWKEERAKVAQESRASRLQQKEDERALRQTEKSADAKSHHNP) are compositionally biased toward basic and acidic residues. The segment at 1-58 (MENSERIKKWKEERAKVAQESRASRLQQKEDERALRQTEKSADAKSHHNPDAGWSATD) is disordered. 2 helical membrane-spanning segments follow: residues 84 to 104 (LFLY…ILTS) and 409 to 429 (WLLF…LITI).

Belongs to the BexC/CtrB/KpsE family.

It is found in the cell inner membrane. May form an ATP-driven capsule polysaccharide export apparatus, in association with the VexA, VexB and VexC proteins. The chain is Vi polysaccharide export inner-membrane protein VexD (vexD) from Salmonella typhi.